A 986-amino-acid chain; its full sequence is Translation initiation factor IF-2 (986 aa).

The tract at residues 95 to 394 (TFVRRDETSA…GRGKHQDQNT (300 aa)) is disordered. The span at 122–182 (ELQRREEEAR…EEEAAKKRAA (61 aa)) shows a compositional bias: basic and acidic residues. Over residues 183-222 (AEAAAREQAQAAKPAQAAQPAAAKAEPVAAKAAEPAVAKQ) the composition is skewed to low complexity. Basic and acidic residues predominate over residues 228–277 (ERAAAERAAQREAAKKAEDAARQAAEKARAEQEQIAKRRAAAEAEARAIR). Over residues 320 to 342 (APSRPAAKKPAAAAPAATTTPSA) the composition is skewed to low complexity. The span at 371–384 (TSGGVDRGWRGGPK) shows a compositional bias: gly residues. One can recognise a tr-type G domain in the interval 486–655 (PRPPVVTVMG…LLQAEVLELK (170 aa)). The segment at 495-502 (GHVDHGKT) is G1. 495-502 (GHVDHGKT) is a binding site for GTP. The G2 stretch occupies residues 520–524 (GITQH). Residues 541–544 (DTPG) are G3. Residues 541 to 545 (DTPGH) and 595 to 598 (NKID) each bind GTP. The interval 595–598 (NKID) is G4. The interval 631–633 (SAK) is G5.

Belongs to the TRAFAC class translation factor GTPase superfamily. Classic translation factor GTPase family. IF-2 subfamily.

It localises to the cytoplasm. In terms of biological role, one of the essential components for the initiation of protein synthesis. Protects formylmethionyl-tRNA from spontaneous hydrolysis and promotes its binding to the 30S ribosomal subunits. Also involved in the hydrolysis of GTP during the formation of the 70S ribosomal complex. The protein is Translation initiation factor IF-2 of Paraburkholderia phytofirmans (strain DSM 17436 / LMG 22146 / PsJN) (Burkholderia phytofirmans).